Here is a 203-residue protein sequence, read N- to C-terminus: Cardiotrophin-1 (203 aa).

This sequence belongs to the IL-6 superfamily. In terms of tissue distribution, highly expressed in heart, skeletal muscle, liver, lung and kidney. Lower levels in testis and brain. No expression in spleen.

It localises to the secreted. Induces cardiac myocyte hypertrophy in vitro. Binds to and activates the ILST/gp130 receptor. The sequence is that of Cardiotrophin-1 (Ctf1) from Mus musculus (Mouse).